The primary structure comprises 751 residues: Photosystem I P700 chlorophyll a apoprotein A1 (751 aa).

8 helical membrane passes run 73-96 (VFSA…FHGA), 159-182 (LYTT…FHYH), 198-222 (LNHH…HVSL), 294-312 (TAHH…GHMY), 349-372 (WHAQ…HHMY), 388-414 (LSLF…IFMV), 436-458 (AIIS…LYIH), and 533-551 (FLVH…LILL). [4Fe-4S] cluster-binding residues include cysteine 575 and cysteine 584. Helical transmembrane passes span 591–612 (HVFL…HFSW) and 665–687 (LSAY…MFLF). Residue histidine 676 coordinates chlorophyll a'. Chlorophyll a is bound by residues methionine 684 and tyrosine 692. Tryptophan 693 contacts phylloquinone. A helical membrane pass occupies residues 725 to 745 (AVGVAHYLLGGIATTWSFFLA).

The protein belongs to the PsaA/PsaB family. As to quaternary structure, the PsaA/B heterodimer binds the P700 chlorophyll special pair and subsequent electron acceptors. PSI consists of a core antenna complex that captures photons, and an electron transfer chain that converts photonic excitation into a charge separation. The eukaryotic PSI reaction center is composed of at least 11 subunits. P700 is a chlorophyll a/chlorophyll a' dimer, A0 is one or more chlorophyll a, A1 is one or both phylloquinones and FX is a shared 4Fe-4S iron-sulfur center. is required as a cofactor.

Its subcellular location is the plastid. The protein localises to the chloroplast thylakoid membrane. The enzyme catalyses reduced [plastocyanin] + hnu + oxidized [2Fe-2S]-[ferredoxin] = oxidized [plastocyanin] + reduced [2Fe-2S]-[ferredoxin]. PsaA and PsaB bind P700, the primary electron donor of photosystem I (PSI), as well as the electron acceptors A0, A1 and FX. PSI is a plastocyanin/cytochrome c6-ferredoxin oxidoreductase, converting photonic excitation into a charge separation, which transfers an electron from the donor P700 chlorophyll pair to the spectroscopically characterized acceptors A0, A1, FX, FA and FB in turn. Oxidized P700 is reduced on the lumenal side of the thylakoid membrane by plastocyanin or cytochrome c6. In Tetradesmus obliquus (Green alga), this protein is Photosystem I P700 chlorophyll a apoprotein A1.